The primary structure comprises 116 residues: MRAKGFTLIELAIVIVIIGILVAIAVPRFVDLTDQANQANVDATAAAVRSAYAIATVQAKGIPTCDQVFANPEGGSTSGSTWTSSDNSTTVSCNASADTFTISRGGKTRTLNLTVN.

Positions Met1–Gly5 are cleaved as a propeptide — leader sequence. An N-methylphenylalanine modification is found at Phe6. The chain crosses the membrane as a helical span at residues Phe6–Val26.

Glycosylated.

It is found in the cell inner membrane. The protein resides in the cell outer membrane. The protein localises to the periplasm. In terms of biological role, plays an essential role in forming the main structure of the narrow T4P pili that participates in twitching motility. The protein is Type IV narrow pilus major component PilA5 (pilA5) of Thermus thermophilus (strain ATCC BAA-163 / DSM 7039 / HB27).